A 244-amino-acid polypeptide reads, in one-letter code: 23S rRNA (guanosine-2'-O-)-methyltransferase RlmB (244 aa).

S-adenosyl-L-methionine contacts are provided by Gly-196, Ile-216, and Leu-225.

Belongs to the class IV-like SAM-binding methyltransferase superfamily. RNA methyltransferase TrmH family. RlmB subfamily. In terms of assembly, homodimer.

The protein localises to the cytoplasm. The enzyme catalyses guanosine(2251) in 23S rRNA + S-adenosyl-L-methionine = 2'-O-methylguanosine(2251) in 23S rRNA + S-adenosyl-L-homocysteine + H(+). In terms of biological role, specifically methylates the ribose of guanosine 2251 in 23S rRNA. The sequence is that of 23S rRNA (guanosine-2'-O-)-methyltransferase RlmB from Photorhabdus laumondii subsp. laumondii (strain DSM 15139 / CIP 105565 / TT01) (Photorhabdus luminescens subsp. laumondii).